The following is a 227-amino-acid chain: MELVFIRHGQSEWNAKNLFTGWRDVKLSEQGLAEAAAAGKKLKENGYEFDIAFTSVLTRAIKTCNIVLEESDQLFVPQIKTWRLNERHYGRLQGLDKKQTAEQYGDEQVRIWRRSYDTLPPLLDKDDEFSAHKDRRYAHLPADVIPDGENLQVTLERVLPFWEDQIAPAILSGKRVLVAAHGNSLRALAKHIEGISDEDIMGLEIPTGQPLVYKLDDNLKVIEKFYL.

Residues R7 to N14, T20 to G21, R59, E86 to Y89, K97, R113 to R114, and G182 to N183 each bind substrate. The active-site Tele-phosphohistidine intermediate is H8. Catalysis depends on E86, which acts as the Proton donor/acceptor.

Belongs to the phosphoglycerate mutase family. BPG-dependent PGAM subfamily. As to quaternary structure, homodimer.

The catalysed reaction is (2R)-2-phosphoglycerate = (2R)-3-phosphoglycerate. Its pathway is carbohydrate degradation; glycolysis; pyruvate from D-glyceraldehyde 3-phosphate: step 3/5. Its function is as follows. Catalyzes the interconversion of 2-phosphoglycerate and 3-phosphoglycerate. This Neisseria meningitidis serogroup A / serotype 4A (strain DSM 15465 / Z2491) protein is 2,3-bisphosphoglycerate-dependent phosphoglycerate mutase.